Consider the following 213-residue polypeptide: 3-demethoxyubiquinol 3-hydroxylase (213 aa).

Glu-62, Glu-92, His-95, Glu-144, Glu-176, and His-179 together coordinate Fe cation.

The protein belongs to the COQ7 family. It depends on Fe cation as a cofactor.

The protein resides in the cell membrane. It carries out the reaction a 5-methoxy-2-methyl-3-(all-trans-polyprenyl)benzene-1,4-diol + AH2 + O2 = a 3-demethylubiquinol + A + H2O. Its pathway is cofactor biosynthesis; ubiquinone biosynthesis. In terms of biological role, catalyzes the hydroxylation of 2-nonaprenyl-3-methyl-6-methoxy-1,4-benzoquinol during ubiquinone biosynthesis. The protein is 3-demethoxyubiquinol 3-hydroxylase of Psychrobacter sp. (strain PRwf-1).